We begin with the raw amino-acid sequence, 186 residues long: Cytochrome b6-f complex iron-sulfur subunit (186 aa).

Residues 16 to 38 (LLSFVTGGAIAATTAATLYPVVL) traverse the membrane as a helical segment. One can recognise a Rieske domain in the interval 74 to 163 (GEPVLTLGLD…ATVSDDKVLI (90 aa)). Cys109, His111, Cys127, and His130 together coordinate [2Fe-2S] cluster. Cys114 and Cys129 are joined by a disulfide.

It belongs to the Rieske iron-sulfur protein family. The 4 large subunits of the cytochrome b6-f complex are cytochrome b6, subunit IV (17 kDa polypeptide, PetD), cytochrome f and the Rieske protein, while the 4 small subunits are PetG, PetL, PetM and PetN. The complex functions as a dimer. The cofactor is [2Fe-2S] cluster.

The protein localises to the cell inner membrane. It carries out the reaction 2 oxidized [plastocyanin] + a plastoquinol + 2 H(+)(in) = 2 reduced [plastocyanin] + a plastoquinone + 4 H(+)(out). In terms of biological role, component of the cytochrome b6-f complex, which mediates electron transfer between photosystem II (PSII) and photosystem I (PSI), cyclic electron flow around PSI, and state transitions. This chain is Cytochrome b6-f complex iron-sulfur subunit, found in Gloeobacter violaceus (strain ATCC 29082 / PCC 7421).